The chain runs to 842 residues: MEFPTKYVYITSNLDKPKEWFTQSEMSLTTTTDTIQKSFVNNSGSSSSSKGFGEAVLLDILDTAGQEEYSAMRDQYVRTGDCFMIVFSIDSRSSFEEVSQLKQHIERVKDRDDVPIIIVGNKVDLESRRQVSRIEADQLARSLRVPYIETSAKTRSNIEEAFFTLVRHTPRNTVYKVVVMGGGGVGKSAIIIQFIQNHFVEEYDPTIEDSYRKQVTISGLPPIGGSLNKKSSSSSSSSSSSSGKTGLFNKIFSGKDKQPSPQQAASPSTIDRTGQISTNRLEANVLSYSMSNLSKEVPLITGDCVYCQGCNVILSRFSNLVKTGDDSFTWKCEFCKYSNSNILLEQGEIPNKDSVEYVLSSPSTSSTTDGSKREESIIIYCIDVSGSMGITTEVPSLQSEWVNAKKGVKGASSGPSYISRLECVQSSIPTMIDRLSIQYPNKRVVLVTFSDEVMIYTQSNSVDGPIVIAGDKLEDFDQLIEIGRSMTYDKLPTASGSSDFLKAKIKSLEPVQSTALGPALLVSAAIASQKMLSEVVICTDGVPNVGLGAIEDLPLGPAQEFYEKVTKLAQNNKTTINIIGISGSHIDLGVIGKVSEQTNGNITIIHPLELAREIRKLTQNPMIATDVEMSICLHPTLEINKYDSKQGLSRVVKQFPNVNSLTDLTLLYSSRNRPTEFVQIYPFQIQIKYTKLDGVRCLRVVSAQLQATPDFNTSTSNANISILAMAFTQQAAKIAQQQEYMESRLHLKAATKLIRSLCNTDEQWEEFYNFEVLREEMEAPLITCIKNKQQRVEKAATDDEIQVFYKMKNVHKSFVEGGRKKDISRRKGEAEINKQYYNIKFT.

Residues 62-66 (DTAGQ), 121-124 (NKVD), and 181-188 (GGGGVGKS) each bind GTP. Residues 253–274 (SGKDKQPSPQQAASPSTIDRTG) are disordered. Over residues 259 to 274 (PSPQQAASPSTIDRTG) the composition is skewed to polar residues. A VWFA domain is found at 377–627 (IIIYCIDVSG…TQNPMIATDV (251 aa)).

Belongs to the small GTPase superfamily. CpRas family.

The chain is Circularly permutated Ras protein 1 (cpras1) from Dictyostelium discoideum (Social amoeba).